The sequence spans 170 residues: Mitochondrial fission 1 protein A (170 aa).

Residues 90–123 form a TPR repeat; sequence REKLYLLAVGYYRSGNYSRSRQLVDRCIEMQADW. The helical transmembrane segment at 142–162 threads the bilayer; the sequence is VIGIGITATAFGAVGLIAGGI.

This sequence belongs to the FIS1 family. As to quaternary structure, interacts with ARC5.

Its subcellular location is the mitochondrion outer membrane. The protein resides in the peroxisome membrane. In terms of biological role, component of the peroxisomal and mitochondrial division machineries. Plays a role in promoting the fission of mitochondria and peroxisomes. The sequence is that of Mitochondrial fission 1 protein A (FIS1A) from Arabidopsis thaliana (Mouse-ear cress).